Here is a 121-residue protein sequence, read N- to C-terminus: LOB domain-containing protein 23 (121 aa).

Residues 4 to 105 form the LOB domain; sequence KRCAACKYLR…NELAKTQAEI (102 aa).

The protein belongs to the LOB domain-containing protein family.

This chain is LOB domain-containing protein 23 (LBD23), found in Arabidopsis thaliana (Mouse-ear cress).